Consider the following 80-residue polypeptide: Sulfur carrier protein TusA (80 aa).

Cys17 acts as the Cysteine persulfide intermediate in catalysis.

This sequence belongs to the sulfur carrier protein TusA family.

Its subcellular location is the cytoplasm. In terms of biological role, sulfur carrier protein which probably makes part of a sulfur-relay system. This chain is Sulfur carrier protein TusA, found in Pseudomonas putida (strain W619).